The primary structure comprises 157 residues: SsrA-binding protein (157 aa).

The span at 136–151 shows a compositional bias: basic and acidic residues; sequence KRETEKKRDWSREKGR. The tract at residues 136 to 157 is disordered; the sequence is KRETEKKRDWSREKGRLLRARG.

Belongs to the SmpB family.

Its subcellular location is the cytoplasm. Functionally, required for rescue of stalled ribosomes mediated by trans-translation. Binds to transfer-messenger RNA (tmRNA), required for stable association of tmRNA with ribosomes. tmRNA and SmpB together mimic tRNA shape, replacing the anticodon stem-loop with SmpB. tmRNA is encoded by the ssrA gene; the 2 termini fold to resemble tRNA(Ala) and it encodes a 'tag peptide', a short internal open reading frame. During trans-translation Ala-aminoacylated tmRNA acts like a tRNA, entering the A-site of stalled ribosomes, displacing the stalled mRNA. The ribosome then switches to translate the ORF on the tmRNA; the nascent peptide is terminated with the 'tag peptide' encoded by the tmRNA and targeted for degradation. The ribosome is freed to recommence translation, which seems to be the essential function of trans-translation. This Rhodopseudomonas palustris (strain HaA2) protein is SsrA-binding protein.